The primary structure comprises 127 residues: Small ribosomal subunit protein uS12 (127 aa).

Positions 8-28 (IRTEREKARQKTKSPALKQCP) are disordered. Aspartate 89 bears the 3-methylthioaspartic acid mark. The segment at 102-127 (LDTAGVKDRKQGRSKYGTKRPKEAKK) is disordered. The segment covering 113–127 (GRSKYGTKRPKEAKK) has biased composition (basic residues).

This sequence belongs to the universal ribosomal protein uS12 family. In terms of assembly, part of the 30S ribosomal subunit. Contacts proteins S8 and S17. May interact with IF1 in the 30S initiation complex.

Functionally, with S4 and S5 plays an important role in translational accuracy. Its function is as follows. Interacts with and stabilizes bases of the 16S rRNA that are involved in tRNA selection in the A site and with the mRNA backbone. Located at the interface of the 30S and 50S subunits, it traverses the body of the 30S subunit contacting proteins on the other side and probably holding the rRNA structure together. The combined cluster of proteins S8, S12 and S17 appears to hold together the shoulder and platform of the 30S subunit. This Nostoc sp. (strain PCC 7120 / SAG 25.82 / UTEX 2576) protein is Small ribosomal subunit protein uS12.